A 210-amino-acid chain; its full sequence is SAP domain-containing ribonucleoprotein (210 aa).

The residue at position 2 (Ala2) is an N-acetylalanine. One can recognise an SAP domain in the interval 8-42 (LHKLKLAELKQECLARGLETKGIKQDLINRLQAYL). Lys10 carries the post-translational modification N6-acetyllysine. The segment covering 45-64 (HAEEEANEEDVLGDETEEEE) has biased composition (acidic residues). Residues 45–87 (HAEEEANEEDVLGDETEEEEPKPIELPVKEEEPPEKVVDMASE) are disordered. Residues 65 to 87 (PKPIELPVKEEEPPEKVVDMASE) show a composition bias toward basic and acidic residues. Residue Lys142 is modified to N6-acetyllysine. The tract at residues 161–210 (VSSISRKSEDDEKLKKRKERFGIVTSSAGTGTTEDTEAKKRKRAERFGIA) is disordered. Position 163 is a phosphoserine (Ser163). A compositionally biased stretch (polar residues) spans 184-193 (VTSSAGTGTT).

This sequence belongs to the SAP domain-containing ribonucleoprotein family. In terms of assembly, interacts with DDX39A. Interacts with FUS. Interacts (via the C-terminal domain) with DDX39B; the interaction is direct and facilitates RNA binding of DDX39B. Component of the transcription/export (TREX) complex at least composed of ALYREF/THOC4, DDX39B, SARNP/CIP29, CHTOP and the THO subcomplex; TREX seems to have dynamic structure involving ATP-dependent remodeling; in the complex interacts directly with DDX39B in a ATP-dependent manner which bridges it to ALYREF/THOC4.

It localises to the nucleus. The protein localises to the nucleus speckle. Binds both single-stranded and double-stranded DNA with higher affinity for the single-stranded form. Specifically binds to scaffold/matrix attachment region DNA. Also binds single-stranded RNA. Enhances RNA unwinding activity of DDX39A. May participate in important transcriptional or translational control of cell growth, metabolism and carcinogenesis. Component of the TREX complex which is thought to couple mRNA transcription, processing and nuclear export, and specifically associates with spliced mRNA and not with unspliced pre-mRNA. The TREX complex is recruited to spliced mRNAs by a transcription-independent mechanism, binds to mRNA upstream of the exon-junction complex (EJC) and is recruited in a splicing- and cap-dependent manner to a region near the 5' end of the mRNA where it functions in mRNA export to the cytoplasm via the TAP/NXF1 pathway. Associates with DDX39B, which facilitates RNA binding of DDX39B and likely plays a role in mRNA export. The protein is SAP domain-containing ribonucleoprotein (Sarnp) of Rattus norvegicus (Rat).